The following is a 650-amino-acid chain: Chaperone protein HtpG (650 aa).

Residues 1 to 349 form an a; substrate-binding region; that stretch reads MTKTTKKFET…SSDLPLNVSR (349 aa). The b stretch occupies residues 350–566; the sequence is EILQEDVQIK…EHGLNANMER (217 aa). A c region spans residues 567-650; the sequence is ILRAMNQDVP…VADGKAAAGE (84 aa).

This sequence belongs to the heat shock protein 90 family. Homodimer.

Its subcellular location is the cytoplasm. Functionally, molecular chaperone. Has ATPase activity. The protein is Chaperone protein HtpG of Geobacter metallireducens (strain ATCC 53774 / DSM 7210 / GS-15).